The chain runs to 289 residues: Protease HtpX (289 aa).

2 consecutive transmembrane segments (helical) span residues 5–25 (IVLF…VMSL) and 33–53 (MSGL…ISLL). Residue histidine 140 participates in Zn(2+) binding. Residue glutamate 141 is part of the active site. Histidine 144 is a binding site for Zn(2+). 2 consecutive transmembrane segments (helical) span residues 155 to 175 (LLQG…GGFI) and 193 to 213 (GIVL…TMWF). Glutamate 218 lines the Zn(2+) pocket.

This sequence belongs to the peptidase M48B family. Zn(2+) serves as cofactor.

The protein resides in the cell inner membrane. This is Protease HtpX from Xylella fastidiosa (strain M12).